We begin with the raw amino-acid sequence, 506 residues long: Cobyric acid synthase (506 aa).

One can recognise a GATase cobBQ-type domain in the interval 251-448; the sequence is DITIAIVQLP…LHGLFDSDAF (198 aa). The active-site Nucleophile is the Cys-332. His-440 is an active-site residue.

This sequence belongs to the CobB/CobQ family. CobQ subfamily.

The protein operates within cofactor biosynthesis; adenosylcobalamin biosynthesis. Functionally, catalyzes amidations at positions B, D, E, and G on adenosylcobyrinic A,C-diamide. NH(2) groups are provided by glutamine, and one molecule of ATP is hydrogenolyzed for each amidation. The polypeptide is Cobyric acid synthase (Salmonella choleraesuis (strain SC-B67)).